Here is a 145-residue protein sequence, read N- to C-terminus: Superoxide dismutase [Mn/Fe] (145 aa).

Residues His-10 and His-64 each contribute to the Fe(3+) site. Residues His-10 and His-64 each coordinate Mn(2+).

The protein belongs to the iron/manganese superoxide dismutase family. The cofactor is Mn(2+). It depends on Fe(3+) as a cofactor.

The enzyme catalyses 2 superoxide + 2 H(+) = H2O2 + O2. Destroys superoxide anion radicals which are normally produced within the cells and which are toxic to biological systems. Catalyzes the dismutation of superoxide anion radicals into O2 and H2O2 by successive reduction and oxidation of the transition metal ion at the active site. The polypeptide is Superoxide dismutase [Mn/Fe] (sodA) (Streptococcus acidominimus).